We begin with the raw amino-acid sequence, 534 residues long: Transcription factor RBF1 (534 aa).

Residues 1 to 36 (MSSNKNQSDLNIPTNSASLKQKQRQQLGIKSEIGAS) form a disordered region. The stretch at 77-147 (AAAAELQHRA…YQQQQQLHQL (71 aa)) forms a coiled coil. Disordered regions lie at residues 262 to 285 (ANLY…HNEE), 353 to 372 (QQQQ…QQAA), 402 to 439 (QLSQ…PHGL), and 477 to 534 (TQGN…SGFL). The span at 267–285 (NEKDQKRKNKPDEPGHNEE) shows a compositional bias: basic and acidic residues. A coiled-coil region spans residues 332-386 (HHLLQQEQQQQQQQQQQQQQQQQQQQQQQHNANSQAQQQAAQLQQQMQQQLQASG). The segment covering 402-435 (QLSQQQSQQQQLHHIPQQRQRTQSQQSQQQPQQT) has biased composition (low complexity).

It belongs to the RBF1 family.

The protein localises to the nucleus. Its subcellular location is the chromosome. It is found in the telomere. Transcriptional activator that binds to the RPG box and to telomeres. Involved in the regulation of the transition between yeast and filamentous forms and plays a role in virulence. Induces expression of HWP1, a major hyphal cell protein and virulence factor. The sequence is that of Transcription factor RBF1 (RBF1) from Candida albicans (strain SC5314 / ATCC MYA-2876) (Yeast).